A 255-amino-acid chain; its full sequence is Hydroxyacylglutathione hydrolase (255 aa).

Zn(2+) contacts are provided by His-55, His-57, Asp-59, His-60, His-111, Asp-131, and His-169.

Belongs to the metallo-beta-lactamase superfamily. Glyoxalase II family. As to quaternary structure, monomer. Zn(2+) serves as cofactor.

The catalysed reaction is an S-(2-hydroxyacyl)glutathione + H2O = a 2-hydroxy carboxylate + glutathione + H(+). The protein operates within secondary metabolite metabolism; methylglyoxal degradation; (R)-lactate from methylglyoxal: step 2/2. In terms of biological role, thiolesterase that catalyzes the hydrolysis of S-D-lactoyl-glutathione to form glutathione and D-lactic acid. The protein is Hydroxyacylglutathione hydrolase of Chromohalobacter salexigens (strain ATCC BAA-138 / DSM 3043 / CIP 106854 / NCIMB 13768 / 1H11).